The chain runs to 310 residues: MSDMSDQTRLSSPPSLPLHKQPQSRYAWLVRSIQLMKPVTWFAPTWAFMCGAIASGALGWNESIGRLLLGMFMAGPILCGLSQVVNDYADREVDAINEPHRLIPSGQVSLRHVYILTAVLTWIGASIALFLGRQVAFFVALGLVFALAYSLRPIRGKRNGWIGNALVAISYEGLAWMAGHAAFAPLTGESVTIALLYSLGAHGIMTVNDFKSIRGDTIMGIRSIPVQYGKVMAARMVVTTMGVAQIAVIGLLFHWGHPVAATVVAILLAAQSIPNARFIRDPENNEVFFNATAIMLYVWGMLAAAIGLAA.

The span at 1 to 13 (MSDMSDQTRLSSP) shows a compositional bias: polar residues. Positions 1–20 (MSDMSDQTRLSSPPSLPLHK) are disordered. Transmembrane regions (helical) follow at residues 39–59 (VTWFAPTWAFMCGAIASGALG), 67–87 (LLLGMFMAGPILCGLSQVVND), 112–132 (HVYILTAVLTWIGASIALFLG), 134–154 (QVAFFVALGLVFALAYSLRPI), 166–186 (LVAISYEGLAWMAGHAAFAPL), 187–207 (TGESVTIALLYSLGAHGIMTV), 248–268 (VIGLLFHWGHPVAATVVAILL), and 287–307 (VFFNATAIMLYVWGMLAAAIG).

The protein localises to the cell membrane. Its pathway is porphyrin-containing compound metabolism; bacteriochlorophyll biosynthesis (light-independent). In terms of biological role, catalyzes the esterification of bacteriochlorophyllide a by geranylgeraniol-PPi. The polypeptide is Bacteriochlorophyll synthase 34 kDa chain (bchG) (Chloroflexus aurantiacus (strain ATCC 29366 / DSM 635 / J-10-fl)).